We begin with the raw amino-acid sequence, 132 residues long: Protein KRTCAP2 homolog (132 aa).

Transmembrane regions (helical) follow at residues 1–21, 35–55, 69–89, and 92–109; these read MAVP…LIFS, MATV…LTAV, AKLF…CGMV, and VCAT…YYIN.

This sequence belongs to the KRTCAP2 family. As to quaternary structure, component of the oligosaccharyltransferase (OST) complex.

The protein localises to the membrane. In terms of biological role, subunit of the oligosaccharyl transferase (OST) complex that catalyzes the initial transfer of a defined glycan (Glc(3)Man(9)GlcNAc(2) in eukaryotes) from the lipid carrier dolichol-pyrophosphate to an asparagine residue within an Asn-X-Ser/Thr consensus motif in nascent polypeptide chains, the first step in protein N-glycosylation. N-glycosylation occurs cotranslationally and the complex associates with the Sec61 complex at the channel-forming translocon complex that mediates protein translocation across the endoplasmic reticulum (ER). All subunits are required for a maximal enzyme activity. This chain is Protein KRTCAP2 homolog, found in Aedes aegypti (Yellowfever mosquito).